Consider the following 248-residue polypeptide: Probable transcriptional regulatory protein BARBAKC583_0163 (248 aa).

The protein belongs to the TACO1 family.

It localises to the cytoplasm. The protein is Probable transcriptional regulatory protein BARBAKC583_0163 of Bartonella bacilliformis (strain ATCC 35685 / KC583 / Herrer 020/F12,63).